The chain runs to 199 residues: Fe/S biogenesis protein NfuA (199 aa).

Positions 151 and 154 each coordinate [4Fe-4S] cluster.

Belongs to the NfuA family. In terms of assembly, homodimer. The cofactor is [4Fe-4S] cluster.

In terms of biological role, involved in iron-sulfur cluster biogenesis. Binds a 4Fe-4S cluster, can transfer this cluster to apoproteins, and thereby intervenes in the maturation of Fe/S proteins. Could also act as a scaffold/chaperone for damaged Fe/S proteins. This chain is Fe/S biogenesis protein NfuA, found in Stenotrophomonas maltophilia (strain R551-3).